The primary structure comprises 322 residues: Heterogeneous nuclear ribonucleoprotein D-like (322 aa).

The interval 1-36 (MTGTARSALPLPQSPARALRPSGAARAAPSLSPSRF) is disordered. Arginine 6 bears the Omega-N-methylarginine mark. Residues 14–36 (SPARALRPSGAARAAPSLSPSRF) show a composition bias toward low complexity. 2 RRM domains span residues 51–133 (NKMF…KGKE) and 136–215 (KKVF…QPKE). The residue at position 64 (lysine 64) is an N6-methyllysine. Lysine 112 participates in a covalent cross-link: Glycyl lysine isopeptide (Lys-Gly) (interchain with G-Cter in SUMO2). N6-acetyllysine is present on lysine 119. Position 144 is a phosphoserine (serine 144). Disordered stretches follow at residues 216–251 (VYRQ…NWNQ) and 299–322 (SGQQ…YQPY). Residues 226-245 (GGRGAAAGGRGGARGRGRGQ) are compositionally biased toward gly residues. Residues 245–322 (QGQNWNQGFN…GNHQNNYQPY (78 aa)) are necessary for interaction with TNPO1. Arginine 310 is modified (dimethylated arginine; alternate). An Omega-N-methylarginine; alternate modification is found at arginine 310.

Interacts with TNPO1 and ZNF148. In terms of processing, dimethylation of Arg-310 is probably of the asymmetric type.

The protein localises to the nucleus. It localises to the cytoplasm. Functionally, acts as a transcriptional regulator. Promotes transcription repression. Promotes transcription activation in differentiated myotubes. Binds to double- and single-stranded DNA sequences. Binds to the transcription suppressor CATR sequence of the COX5B promoter. Binds with high affinity to RNA molecules that contain AU-rich elements (AREs) found within the 3'-UTR of many proto-oncogenes and cytokine mRNAs. Binds both to nuclear and cytoplasmic poly(A) mRNAs. Binds to poly(G) and poly(A), but not to poly(U) or poly(C) RNA homopolymers. Binds to the 5'-ACUAGC-3' RNA consensus sequence. The sequence is that of Heterogeneous nuclear ribonucleoprotein D-like (Hnrnpdl) from Rattus norvegicus (Rat).